The primary structure comprises 427 residues: 3-isopropylmalate dehydratase large subunit (427 aa).

[4Fe-4S] cluster contacts are provided by C308, C368, and C371.

Belongs to the aconitase/IPM isomerase family. LeuC type 2 subfamily. In terms of assembly, heterodimer of LeuC and LeuD. [4Fe-4S] cluster serves as cofactor.

It catalyses the reaction (2R,3S)-3-isopropylmalate = (2S)-2-isopropylmalate. It participates in amino-acid biosynthesis; L-leucine biosynthesis; L-leucine from 3-methyl-2-oxobutanoate: step 2/4. In terms of biological role, catalyzes the isomerization between 2-isopropylmalate and 3-isopropylmalate, via the formation of 2-isopropylmaleate. The chain is 3-isopropylmalate dehydratase large subunit from Geobacter metallireducens (strain ATCC 53774 / DSM 7210 / GS-15).